We begin with the raw amino-acid sequence, 217 residues long: Uracil-DNA glycosylase (217 aa).

Residue D62 is the Proton acceptor of the active site.

Belongs to the uracil-DNA glycosylase (UDG) superfamily. UNG family.

It is found in the cytoplasm. The catalysed reaction is Hydrolyzes single-stranded DNA or mismatched double-stranded DNA and polynucleotides, releasing free uracil.. Excises uracil residues from the DNA which can arise as a result of misincorporation of dUMP residues by DNA polymerase or due to deamination of cytosine. The sequence is that of Uracil-DNA glycosylase from Streptococcus pneumoniae (strain JJA).